The sequence spans 504 residues: Maturase K (504 aa).

This sequence belongs to the intron maturase 2 family. MatK subfamily.

The protein localises to the plastid. The protein resides in the chloroplast. Its function is as follows. Usually encoded in the trnK tRNA gene intron. Probably assists in splicing its own and other chloroplast group II introns. This Bombax buonopozense (Red-flowered silk cotton tree) protein is Maturase K.